We begin with the raw amino-acid sequence, 357 residues long: DNA integrity scanning protein DisA (357 aa).

Residues 9-147 enclose the DAC domain; it reads DRKLLEILKT…DDIKYILRDS (139 aa). ATP contacts are provided by residues Gly-76, Leu-94, and 107–111; that span reads TRHRT.

It belongs to the DisA family. As to quaternary structure, homooctamer. Mg(2+) is required as a cofactor.

The enzyme catalyses 2 ATP = 3',3'-c-di-AMP + 2 diphosphate. Participates in a DNA-damage check-point that is active prior to asymmetric division when DNA is damaged. DisA forms globular foci that rapidly scan along the chromosomes during sporulation, searching for lesions. When a lesion is present, DisA pauses at the lesion site. This triggers a cellular response that culminates in a temporary block in sporulation initiation. In terms of biological role, also has diadenylate cyclase activity, catalyzing the condensation of 2 ATP molecules into cyclic di-AMP (c-di-AMP). c-di-AMP acts as a signaling molecule that couples DNA integrity with progression of sporulation. The rise in c-di-AMP level generated by DisA while scanning the chromosome, operates as a positive signal that advances sporulation; upon encountering a lesion, the DisA focus arrests at the damaged site and halts c-di-AMP synthesis. The polypeptide is DNA integrity scanning protein DisA (Clostridium acetobutylicum (strain ATCC 824 / DSM 792 / JCM 1419 / IAM 19013 / LMG 5710 / NBRC 13948 / NRRL B-527 / VKM B-1787 / 2291 / W)).